Reading from the N-terminus, the 763-residue chain is Phosphoglycerol transferase I (763 aa).

4 helical membrane passes run 4–19 (LLSV…IYAW), 26–48 (WWFA…LYAS), 76–98 (YILP…GWVL), and 110–132 (YSLL…RQIT).

The protein belongs to the OpgB family.

It localises to the cell inner membrane. It catalyses the reaction a phosphatidylglycerol + a membrane-derived-oligosaccharide D-glucose = a 1,2-diacyl-sn-glycerol + a membrane-derived-oligosaccharide 6-(glycerophospho)-D-glucose.. Its pathway is glycan metabolism; osmoregulated periplasmic glucan (OPG) biosynthesis. Its function is as follows. Transfers a phosphoglycerol residue from phosphatidylglycerol to the membrane-bound nascent glucan backbones. In Salmonella typhi, this protein is Phosphoglycerol transferase I.